A 298-amino-acid polypeptide reads, in one-letter code: MKIGQIRQSLSGFYDVYADGQMYRTRARGNFRKRRITPLVGDNVEFDAATPQEGYVLNILDRQTQLVRPPVANVDLGIVVTATTEQEFSTNLLDRQLVALAVAGIEPLLYFAKTDLLTDEVYQQRLTLADAYRQIGYQVICERTAFSPAALAAVKTALAGHVAVVMGQTGAGKSTLLNHLQPGLALATGEISQALNRGKHTTRKVSLIPIADGLVADTPGFSSYEVFDIAANELTHYFPEFVRLSVDCKYRGCVHINEPQCAVKQALAAGELLASRYDNYLQFYETIKNKKVIYNKKK.

Residues 63 to 224 (QTQLVRPPVA…VADTPGFSSY (162 aa)) enclose the CP-type G domain. Residues 112–115 (AKTD) and 167–175 (GQTGAGKST) contribute to the GTP site. Cysteine 248, cysteine 253, histidine 255, and cysteine 261 together coordinate Zn(2+).

The protein belongs to the TRAFAC class YlqF/YawG GTPase family. RsgA subfamily. Monomer. Associates with 30S ribosomal subunit, binds 16S rRNA. Zn(2+) is required as a cofactor.

The protein localises to the cytoplasm. In terms of biological role, one of several proteins that assist in the late maturation steps of the functional core of the 30S ribosomal subunit. Helps release RbfA from mature subunits. May play a role in the assembly of ribosomal proteins into the subunit. Circularly permuted GTPase that catalyzes slow GTP hydrolysis, GTPase activity is stimulated by the 30S ribosomal subunit. This is Small ribosomal subunit biogenesis GTPase RsgA 1 from Lactiplantibacillus plantarum (strain ATCC BAA-793 / NCIMB 8826 / WCFS1) (Lactobacillus plantarum).